Consider the following 950-residue polypeptide: ABC transporter A family member 9 (950 aa).

6 helical membrane passes run 31 to 51 (ATCLHLFSSFFFILLIFSIEE), 223 to 243 (IISAFYLMGPVFFLAFSMFGF), 276 to 296 (WLIWEGILTFVSSLFLVLFGM), 308 to 328 (FVLVFLLFFLFQFNMIGLAFA), 342 to 362 (VGFLVFLVGFITQIVTTAGFP), and 426 to 446 (IWLVGTFFFWFVLALYFDNII). The ABC transporter domain maps to 520–765 (VQIHGLAKTY…FGTGFVATVS (246 aa)). 566 to 573 (GPNGAGKT) provides a ligand contact to ATP.

It belongs to the ABC transporter superfamily. ABCA family. CPR flippase (TC 3.A.1.211) subfamily. Highly expressed in siliques. Detected in seedlings, rosette leaves, stems and flowers.

It localises to the endoplasmic reticulum membrane. Mediates the transport of acyl-CoAs and/or free fatty acids to the endoplasmic reticulum. Has no effect on the selectivity of fatty acid incorporation into triacylglycerol or further desaturation steps. In Arabidopsis thaliana (Mouse-ear cress), this protein is ABC transporter A family member 9 (ABCA9).